The primary structure comprises 276 residues: Diaminopimelate epimerase (276 aa).

Substrate is bound by residues Asn13, Gln46, and Asn66. Cys75 serves as the catalytic Proton donor. Substrate is bound by residues 76–77 (GN), Asn159, Asn192, and 210–211 (ER). Residue Cys219 is the Proton acceptor of the active site. 220-221 (GT) is a substrate binding site.

Belongs to the diaminopimelate epimerase family. As to quaternary structure, homodimer.

The protein resides in the cytoplasm. The catalysed reaction is (2S,6S)-2,6-diaminopimelate = meso-2,6-diaminopimelate. Its pathway is amino-acid biosynthesis; L-lysine biosynthesis via DAP pathway; DL-2,6-diaminopimelate from LL-2,6-diaminopimelate: step 1/1. Catalyzes the stereoinversion of LL-2,6-diaminopimelate (L,L-DAP) to meso-diaminopimelate (meso-DAP), a precursor of L-lysine and an essential component of the bacterial peptidoglycan. The chain is Diaminopimelate epimerase from Chromobacterium violaceum (strain ATCC 12472 / DSM 30191 / JCM 1249 / CCUG 213 / NBRC 12614 / NCIMB 9131 / NCTC 9757 / MK).